A 320-amino-acid polypeptide reads, in one-letter code: Foldase protein PrsA (320 aa).

Residues 1 to 20 (MKMINKLIVPVTASALLLGA) form the signal peptide. Cys21 carries the N-palmitoyl cysteine lipid modification. A lipid anchor (S-diacylglycerol cysteine) is attached at Cys21. A PpiC domain is found at 139-245 (EDSKKASHIL…FGYHIIKADK (107 aa)). The interval 159–198 (EGLDDKEAKQKAEEIQKEVSKDPSKFGEIAKKESMDTGSA) is disordered.

This sequence belongs to the PrsA family.

The protein localises to the cell membrane. It catalyses the reaction [protein]-peptidylproline (omega=180) = [protein]-peptidylproline (omega=0). Functionally, plays a major role in protein secretion by helping the post-translocational extracellular folding of several secreted proteins. The chain is Foldase protein PrsA from Staphylococcus aureus (strain bovine RF122 / ET3-1).